Here is a 425-residue protein sequence, read N- to C-terminus: GTPase Obg (425 aa).

The Obg domain maps to 1 to 158; it reads MFKDYAKIHV…LWLELELKLL (158 aa). Residues 159-329 enclose the OBG-type G domain; that stretch reads ADVGLVGFPN…LIYRTYRLLE (171 aa). Residues 165–172, 190–194, 212–215, 282–285, and 310–312 each bind GTP; these read GFPNAGKS, FTTLE, DIPG, NKTD, and SAL. Positions 172 and 192 each coordinate Mg(2+). An OCT domain is found at 341 to 421; sequence VPDERETDVT…IGRFEFEYSE (81 aa).

The protein belongs to the TRAFAC class OBG-HflX-like GTPase superfamily. OBG GTPase family. In terms of assembly, monomer. It depends on Mg(2+) as a cofactor.

It is found in the cytoplasm. Functionally, an essential GTPase which binds GTP, GDP and possibly (p)ppGpp with moderate affinity, with high nucleotide exchange rates and a fairly low GTP hydrolysis rate. Plays a role in control of the cell cycle, stress response, ribosome biogenesis and in those bacteria that undergo differentiation, in morphogenesis control. This chain is GTPase Obg, found in Desulforudis audaxviator (strain MP104C).